Here is a 342-residue protein sequence, read N- to C-terminus: Anthranilate phosphoribosyltransferase (342 aa).

5-phospho-alpha-D-ribose 1-diphosphate is bound by residues G83, 86-87 (GD), T91, 93-96 (NIST), 111-119 (KHGNRGVSS), and S123. Residue G83 coordinates anthranilate. Residue S95 participates in Mg(2+) binding. N114 is an anthranilate binding site. R169 serves as a coordination point for anthranilate. Positions 228 and 229 each coordinate Mg(2+).

This sequence belongs to the anthranilate phosphoribosyltransferase family. As to quaternary structure, homodimer. Mg(2+) serves as cofactor.

The catalysed reaction is N-(5-phospho-beta-D-ribosyl)anthranilate + diphosphate = 5-phospho-alpha-D-ribose 1-diphosphate + anthranilate. It participates in amino-acid biosynthesis; L-tryptophan biosynthesis; L-tryptophan from chorismate: step 2/5. Catalyzes the transfer of the phosphoribosyl group of 5-phosphorylribose-1-pyrophosphate (PRPP) to anthranilate to yield N-(5'-phosphoribosyl)-anthranilate (PRA). The sequence is that of Anthranilate phosphoribosyltransferase from Paraburkholderia phymatum (strain DSM 17167 / CIP 108236 / LMG 21445 / STM815) (Burkholderia phymatum).